The primary structure comprises 213 residues: UPF0056 membrane protein AF_2111 (213 aa).

6 consecutive transmembrane segments (helical) span residues 1–21 (MDIA…FIII), 51–71 (IIAF…LDYF), 75–95 (ISSL…DILL), 118–138 (VFPL…GIVL), 142–162 (AGDV…YSIV), and 181–201 (ADIA…EFVF).

The protein belongs to the UPF0056 (MarC) family.

The protein resides in the cell membrane. This is UPF0056 membrane protein AF_2111 from Archaeoglobus fulgidus (strain ATCC 49558 / DSM 4304 / JCM 9628 / NBRC 100126 / VC-16).